Here is a 299-residue protein sequence, read N- to C-terminus: Sugar transporter SWEET1 (299 aa).

The 85-residue stretch at 7 to 91 (QVLSISAITT…CVFFLIYSLP (85 aa)) folds into the MtN3/slv 1 domain. Transmembrane regions (helical) follow at residues 8–28 (VLSI…IPIC), 36–56 (AVGD…SFWL), 67–87 (MIIV…FFLI), 95–115 (FTCQ…WIAL), 124–144 (VICM…LGVV), 155–175 (LPMC…GNLV), and 180–200 (IIIP…LFVV). Positions 121 to 205 (YLGVICMTFN…ALFVVLPIRE (85 aa)) constitute a MtN3/slv 2 domain. The segment at 230–299 (RGDCIVSSPP…DPDLSSIQSP (70 aa)) is disordered. The span at 247-261 (NETRSDVEDKFDKLM) shows a compositional bias: basic and acidic residues. Positions 276–299 (SMGSPPSYKSRSSSDPDLSSIQSP) are enriched in low complexity.

Belongs to the SWEET sugar transporter family.

Its subcellular location is the golgi apparatus membrane. The protein localises to the cell membrane. Mediates both low-affinity uptake and efflux of sugar across the membrane. The polypeptide is Sugar transporter SWEET1 (swt-1) (Caenorhabditis elegans).